Consider the following 230-residue polypeptide: NAD-dependent protein deacylase 1 (230 aa).

A Deacetylase sirtuin-type domain is found at 1–226 (MESGIPTYRE…SHLSAFLSRE (226 aa)). Substrate is bound by residues Tyr41 and Arg44. 75–78 (QNID) contributes to the NAD(+) binding site. Catalysis depends on His93, which acts as the Proton acceptor. Residues Cys101, Cys104, Cys128, and Cys131 each contribute to the Zn(2+) site. NAD(+)-binding positions include 168–170 (GTS), 194–196 (NTV), and Ala212.

It belongs to the sirtuin family. Class III subfamily. The cofactor is Zn(2+).

It is found in the cytoplasm. The enzyme catalyses N(6)-acetyl-L-lysyl-[protein] + NAD(+) + H2O = 2''-O-acetyl-ADP-D-ribose + nicotinamide + L-lysyl-[protein]. It catalyses the reaction N(6)-succinyl-L-lysyl-[protein] + NAD(+) + H2O = 2''-O-succinyl-ADP-D-ribose + nicotinamide + L-lysyl-[protein]. Its function is as follows. NAD-dependent lysine deacetylase and desuccinylase that specifically removes acetyl and succinyl groups on target proteins. Modulates the activities of several proteins which are inactive in their acylated form. This Pseudomonas syringae pv. tomato (strain ATCC BAA-871 / DC3000) protein is NAD-dependent protein deacylase 1.